A 535-amino-acid polypeptide reads, in one-letter code: Palmdelphin (535 aa).

The stretch at 1 to 105 (MEEAELLKER…KEELQVSTKE (105 aa)) forms a coiled coil. Residues 423–450 (VVIDDDDDDDDDEEADKKGEENTKESVS) are disordered. Residues 424-436 (VIDDDDDDDDDEE) show a composition bias toward acidic residues. Basic and acidic residues predominate over residues 437 to 446 (ADKKGEENTK).

The protein belongs to the paralemmin family.

It localises to the cytoplasm. The protein resides in the cell projection. It is found in the dendrite. Its subcellular location is the dendritic spine. The chain is Palmdelphin (palmd) from Xenopus laevis (African clawed frog).